We begin with the raw amino-acid sequence, 519 residues long: UPF0053 protein bbp_300 (519 aa).

Helical transmembrane passes span 13–35, 48–70, 80–102, 123–145, 150–172, 185–207, and 212–231; these read LLTL…AILS, LIGL…WMVT, YFSF…FKAT, AGFW…DAII, TINN…LIAS, VVVL…ALGF, and GYLY…NQIA. 2 CBS domains span residues 311–373 and 374–434; these read MTPR…IIDF and SSTT…DADE.

The protein belongs to the UPF0053 family.

The protein resides in the cell membrane. In Buchnera aphidicola subsp. Baizongia pistaciae (strain Bp), this protein is UPF0053 protein bbp_300.